Here is a 426-residue protein sequence, read N- to C-terminus: Deoxyguanosinetriphosphate triphosphohydrolase-like protein (426 aa).

The interval 1–23 is disordered; it reads MYPYSESDAQRLHQEAPKASQLA. The HD domain occupies 67–217; that stretch reads RLTHSLEVAQ…MDFSDDIAYS (151 aa).

The protein belongs to the dGTPase family. Type 2 subfamily.

This is Deoxyguanosinetriphosphate triphosphohydrolase-like protein from Corynebacterium efficiens (strain DSM 44549 / YS-314 / AJ 12310 / JCM 11189 / NBRC 100395).